Here is a 552-residue protein sequence, read N- to C-terminus: N-acetylglucosamine-6-sulfatase (552 aa).

An N-terminal signal peptide occupies residues 1–36; that stretch reads MRLLPLAPGRLRRGSPRHLPSCSPALLLLVLGGCLG. Positions 55, 56, and 91 each coordinate Ca(2+). Cys-91 serves as the catalytic Nucleophile. Residue Cys-91 is modified to 3-oxoalanine (Cys). 7 N-linked (GlcNAc...) asparagine glycosylation sites follow: Asn-111, Asn-117, Asn-183, Asn-198, Asn-210, Asn-279, and Asn-317. Ca(2+) is bound by residues Asp-326 and Asn-327. N-linked (GlcNAc...) asparagine glycosylation is found at Asn-362, Asn-387, Asn-405, Asn-422, Asn-449, and Asn-480. Residue Ser-541 is modified to Phosphoserine.

Belongs to the sulfatase family. It depends on Ca(2+) as a cofactor. The form A (78 kDa) is processed by internal peptidase cleavage to a 32 kDa N-terminal species (form B) and a 48 kDa C-terminal species. In terms of processing, the conversion to 3-oxoalanine (also known as C-formylglycine, FGly), of a serine or cysteine residue in prokaryotes and of a cysteine residue in eukaryotes, is critical for catalytic activity.

The protein localises to the lysosome. It carries out the reaction Hydrolysis of the 6-sulfate groups of the N-acetyl-D-glucosamine 6-sulfate units of heparan sulfate and keratan sulfate.. Hydrolyzes 6-sulfate groups in N-acetyl-d-glucosaminide units of heparin sulfate and keratan sulfate. The polypeptide is N-acetylglucosamine-6-sulfatase (GNS) (Homo sapiens (Human)).